Reading from the N-terminus, the 201-residue chain is MARYTGPKTKIARKFGEAIFGDDKSFEKRNYPPGQHGNNRRRGKKSEYAIQLMEKQKAKYTYGILERQFRNMFEKATRAQGITGEVLLQLCESRLDNVVYRMGVAPSRRAARQLVGHRHITVNGELVNIPSYHLKAGDVVGVREKSKSLAVVQESLSNNSSVYEWISWNSEKKEGTFVAVPGRVQIPENINEQFIVELYSK.

Residues 26–45 (FEKRNYPPGQHGNNRRRGKK) are disordered. Residues 93–153 (SRLDNVVYRM…EKSKSLAVVQ (61 aa)) enclose the S4 RNA-binding domain.

Belongs to the universal ribosomal protein uS4 family. In terms of assembly, part of the 30S ribosomal subunit. Contacts protein S5. The interaction surface between S4 and S5 is involved in control of translational fidelity.

In terms of biological role, one of the primary rRNA binding proteins, it binds directly to 16S rRNA where it nucleates assembly of the body of the 30S subunit. Its function is as follows. With S5 and S12 plays an important role in translational accuracy. The chain is Small ribosomal subunit protein uS4 from Christiangramia forsetii (strain DSM 17595 / CGMCC 1.15422 / KT0803) (Gramella forsetii).